Reading from the N-terminus, the 755-residue chain is Protein phosphatase 1E (755 aa).

The disordered stretch occupies residues 21-131; sequence EFRGPCGGGE…PPLPPLPRPL (111 aa). A run of 7 repeats spans residues 31-32, 33-34, 35-36, 37-38, 39-40, 41-42, and 43-44. The 11 X 2 AA tandem repeats of P-E stretch occupies residues 31–52; sequence PEPEPEPEPEPEPESEPEPEPE. 2 stretches are compositionally biased toward acidic residues: residues 31-68 and 77-101; these read PEPE…EPGE and EEGD…EEEG. The 8; approximate repeat unit spans residues 45-46; sequence SE. Tandem repeats lie at residues 47–48, 49–50, and 51–52. Positions 102–113 are enriched in low complexity; the sequence is AATAAAAPGHSA. A compositionally biased stretch (pro residues) spans 114 to 129; that stretch reads VPPPPPQLPPLPPLPR. One can recognise a PPM-type phosphatase domain in the interval 231–488; it reads ETSIHAIKNM…DNITVIVVFL (258 aa). The Mn(2+) site is built by D273, G274, D435, and D479. Positions 498–537 are disordered; that stretch reads SEESDWTENSFQGGQEDGGDDKENHGECKRPWPQHQCSAP. The span at 518 to 527 shows a compositional bias: basic and acidic residues; sequence DKENHGECKR. S535 and S548 each carry phosphoserine.

Belongs to the PP2C family. Heterotrimer. Interacts with PAX1 and ARHGEF6 (or ARHGEF7). It depends on Mg(2+) as a cofactor. Mn(2+) serves as cofactor.

It localises to the nucleus. The protein resides in the cytoplasm. It carries out the reaction O-phospho-L-seryl-[protein] + H2O = L-seryl-[protein] + phosphate. It catalyses the reaction O-phospho-L-threonyl-[protein] + H2O = L-threonyl-[protein] + phosphate. Functionally, protein phosphatase that inactivates multifunctional CaM kinases such as CAMK4 and CAMK2. Dephosphorylates and inactivates PAK. May play a role in the inhibition of actin fiber stress breakdown and in morphological changes driven by TNK2/CDC42. Dephosphorylates PRKAA2. In Homo sapiens (Human), this protein is Protein phosphatase 1E (PPM1E).